Here is a 91-residue protein sequence, read N- to C-terminus: DNA/RNA-binding protein Alba (91 aa).

Residue Lys11 is modified to N6-acetyllysine.

This sequence belongs to the histone-like Alba family. Post-translationally, acetylated. Acetylation at Lys-11 decreases DNA-binding affinity.

Its subcellular location is the cytoplasm. The protein localises to the chromosome. Functionally, binds double-stranded DNA tightly but without sequence specificity. Incubation with DNA in vitro gives fibrous structures 10.3 +/- 1.1 nm in thickness (naked DNA is 1.83 +/- 0.37 nm). This protein does not significantly compact DNA. The sequence is that of DNA/RNA-binding protein Alba from Thermococcus kodakarensis (strain ATCC BAA-918 / JCM 12380 / KOD1) (Pyrococcus kodakaraensis (strain KOD1)).